The sequence spans 110 residues: PTS system oligo-beta-mannoside-specific EIIA component (110 aa).

In terms of domain architecture, PTS EIIA type-3 spans 9-107 (LTDEQISFQL…VKEMLDLFKT (99 aa)). Catalysis depends on histidine 83, which acts as the Tele-phosphohistidine intermediate. Position 83 is a phosphohistidine; by HPr (histidine 83).

It is found in the cytoplasm. Functionally, the phosphoenolpyruvate-dependent sugar phosphotransferase system (sugar PTS), a major carbohydrate active transport system, catalyzes the phosphorylation of incoming sugar substrates concomitantly with their translocation across the cell membrane. The enzyme II GmuABC PTS system is involved in the transport of oligo-glucomannans such as cellobiose or mannobiose. The protein is PTS system oligo-beta-mannoside-specific EIIA component of Bacillus subtilis (strain 168).